Here is a 616-residue protein sequence, read N- to C-terminus: tRNA uridine 5-carboxymethylaminomethyl modification enzyme MnmG (616 aa).

FAD is bound by residues 10 to 15 (GAGHAG), V122, and S177. 271 to 285 (GPRYCPSIEDKVVRF) contacts NAD(+). Q368 is a binding site for FAD.

It belongs to the MnmG family. Homodimer. Heterotetramer of two MnmE and two MnmG subunits. Requires FAD as cofactor.

Its subcellular location is the cytoplasm. NAD-binding protein involved in the addition of a carboxymethylaminomethyl (cmnm) group at the wobble position (U34) of certain tRNAs, forming tRNA-cmnm(5)s(2)U34. The protein is tRNA uridine 5-carboxymethylaminomethyl modification enzyme MnmG of Malacoplasma penetrans (strain HF-2) (Mycoplasma penetrans).